Reading from the N-terminus, the 355-residue chain is Cyanide hydratase (355 aa).

In terms of domain architecture, CN hydrolase spans Y6–N286. E46 (proton acceptor) is an active-site residue. K128 is an active-site residue. C163 serves as the catalytic Nucleophile.

Belongs to the carbon-nitrogen hydrolase superfamily. Nitrilase family. In terms of assembly, oligomer of dimers, forming left-handed helical fibers.

The enzyme catalyses formamide = hydrogen cyanide + H2O. In terms of biological role, catalyzes the hydration of cyanide to formamide. Degradation of cyanide may be important for plant pathogenic fungi in infection of cyanogenic plants. Also has low but significant nitrilase activity with acetonitrile, propionitrile and benzonitrile. The chain is Cyanide hydratase from Gibberella baccata (Fusarium lateritium).